A 149-amino-acid polypeptide reads, in one-letter code: Ribonuclease pancreatic alpha-type (149 aa).

The N-terminal stretch at 1–25 (MGLEKSFILFSLLVLVLGWVQPSLG) is a signal peptide. Residues Lys32 and Arg35 each coordinate substrate. His37 functions as the Proton acceptor in the catalytic mechanism. 4 cysteine pairs are disulfide-bonded: Cys51–Cys109, Cys65–Cys120, Cys83–Cys135, and Cys90–Cys97. Residues 66–70 (KPVNT), Lys91, and Arg110 each bind substrate. The active-site Proton donor is the His144.

The protein belongs to the pancreatic ribonuclease family. Monomer.

It localises to the secreted. It catalyses the reaction an [RNA] containing cytidine + H2O = an [RNA]-3'-cytidine-3'-phosphate + a 5'-hydroxy-ribonucleotide-3'-[RNA].. It carries out the reaction an [RNA] containing uridine + H2O = an [RNA]-3'-uridine-3'-phosphate + a 5'-hydroxy-ribonucleotide-3'-[RNA].. Functionally, endonuclease that catalyzes the cleavage of RNA on the 3' side of pyrimidine nucleotides. Acts on single-stranded and double-stranded RNA. This chain is Ribonuclease pancreatic alpha-type, found in Rattus fuscipes (Bush rat).